The sequence spans 473 residues: Cysteine--tRNA ligase (473 aa).

Cys30 lines the Zn(2+) pocket. Residues 32–42 (MTVYDYCHIGH) carry the 'HIGH' region motif. Residues Cys213, His238, and Glu242 each contribute to the Zn(2+) site. The 'KMSKS' region motif lies at 270–274 (KMSKS). Position 273 (Lys273) interacts with ATP.

Belongs to the class-I aminoacyl-tRNA synthetase family. As to quaternary structure, monomer. The cofactor is Zn(2+).

The protein resides in the cytoplasm. The enzyme catalyses tRNA(Cys) + L-cysteine + ATP = L-cysteinyl-tRNA(Cys) + AMP + diphosphate. The polypeptide is Cysteine--tRNA ligase (Acinetobacter baylyi (strain ATCC 33305 / BD413 / ADP1)).